Reading from the N-terminus, the 161-residue chain is Low molecular weight phosphotyrosine protein phosphatase (161 aa).

The active-site Nucleophile is the Cys14. Residue Arg20 is the Transition state stabilizer of the active site. At Ser57 the chain carries Phosphoserine. Asp133 (proton donor) is an active-site residue.

The protein belongs to the low molecular weight phosphotyrosine protein phosphatase family.

The protein localises to the cytoplasm. The enzyme catalyses O-phospho-L-tyrosyl-[protein] + H2O = L-tyrosyl-[protein] + phosphate. It carries out the reaction a phosphate monoester + H2O = an alcohol + phosphate. In terms of biological role, acts on tyrosine phosphorylated proteins, low-MW aryl phosphates and natural and synthetic acyl phosphates. The protein is Low molecular weight phosphotyrosine protein phosphatase of Saccharomyces cerevisiae (strain ATCC 204508 / S288c) (Baker's yeast).